The sequence spans 880 residues: DNA mismatch repair protein MutS (880 aa).

635–642 (GPNMGGKS) serves as a coordination point for ATP.

Belongs to the DNA mismatch repair MutS family.

This protein is involved in the repair of mismatches in DNA. It is possible that it carries out the mismatch recognition step. This protein has a weak ATPase activity. The polypeptide is DNA mismatch repair protein MutS (Nitrosomonas eutropha (strain DSM 101675 / C91 / Nm57)).